We begin with the raw amino-acid sequence, 192 residues long: MQADTPKGCFVAVVGPSGAGKDTIMDAARVALSGDMRFHFVRRIITRTQMPGTEDHDSLDEADFARAAGEGRFALHWQAHGLRYGLPKTLDDEIAGGAVVIANVSRRVLSDIRRLYTSRSVVVISARTEVLAQRLASRGRESREEIAARLAREVGFDDGSGDVVTIDNSGEVGASTKAFLYHLHEIAVKTIA.

15-22 (GPSGAGKD) provides a ligand contact to ATP.

Belongs to the ribose 1,5-bisphosphokinase family.

It carries out the reaction alpha-D-ribose 1,5-bisphosphate + ATP = 5-phospho-alpha-D-ribose 1-diphosphate + ADP. It participates in metabolic intermediate biosynthesis; 5-phospho-alpha-D-ribose 1-diphosphate biosynthesis; 5-phospho-alpha-D-ribose 1-diphosphate from D-ribose 5-phosphate (route II): step 3/3. Catalyzes the phosphorylation of ribose 1,5-bisphosphate to 5-phospho-D-ribosyl alpha-1-diphosphate (PRPP). This is Ribose 1,5-bisphosphate phosphokinase PhnN from Brucella abortus biovar 1 (strain 9-941).